The chain runs to 578 residues: NADPH oxidase 4 (578 aa).

The Cytoplasmic portion of the chain corresponds to Met1–His16. Residues Leu17–Tyr37 form a helical membrane-spanning segment. Residues Asn38 to Ser62 lie on the Extracellular side of the membrane. In terms of domain architecture, Ferric oxidoreductase spans Arg58 to Ile303. A helical membrane pass occupies residues Val63–Leu83. At Arg84–Leu104 the chain is on the cytoplasmic side. The helical transmembrane segment at His105–Val125 threads the bilayer. Topologically, residues Asn126–Leu154 are extracellular. N-linked (GlcNAc...) asparagine glycosylation is present at Asn133. Residues Leu155–Val175 traverse the membrane as a helical segment. The Cytoplasmic segment spans residues Thr176–Asp188. Residues Ile189–Ser209 form a helical membrane-spanning segment. Topologically, residues Gly210–Glu424 are extracellular. The tract at residues Asn218 to Glu273 is E-loop; essential for H2O2 generating catalytic activity. N-linked (GlcNAc...) asparagine glycosylation is present at Asn230. The tract at residues His248 to Glu575 is mediates interaction with TLR4. An FAD-binding FR-type domain is found at Arg304 to Glu419. Residues Val425 to Leu445 form a helical membrane-spanning segment. The Cytoplasmic segment spans residues Leu446 to Ser578.

In terms of assembly, interacts with, relocalizes and stabilizes CYBA/p22phox. Interacts with TLR4. Interacts with protein disulfide isomerase. Interacts with PPP1R15A. Interacts with LRRC8A; this interaction prevents the ubiquitin-mediated degradation of LRRC8A. It depends on heme as a cofactor. Post-translationally, N-glycosylation is required for the function. EXpressed in brain, in all layers of the cerebellum, in pyramidal cells of the Ammon horn and in Purkinje cells (at protein level). Expressed in osteoclasts, leukocytes, kidney, liver and lung.

It is found in the cytoplasm. Its subcellular location is the endoplasmic reticulum membrane. The protein resides in the cell membrane. The protein localises to the cell junction. It localises to the focal adhesion. It is found in the nucleus. It catalyses the reaction NADPH + 2 O2 = 2 superoxide + NADP(+) + H(+). The catalysed reaction is NADPH + O2 + H(+) = H2O2 + NADP(+). With respect to regulation, activated by insulin. Inhibited by diphenylene iodonium. Inhibited by plumbagin. Activated by phorbol 12-myristate 13-acetate (PMA). In terms of biological role, NADPH oxidase that catalyzes predominantly the reduction of oxygen to H2O2. Can also catalyze to a smaller extent, the reduction of oxygen to superoxide. May function as an oxygen sensor regulating the KCNK3/TASK-1 potassium channel and HIF1A activity. May regulate insulin signaling cascade. May play a role in apoptosis, bone resorption and lipolysaccharide-mediated activation of NFKB. May produce superoxide in the nucleus and play a role in regulating gene expression upon cell stimulation. Promotes ferroptosis, reactive oxygen species production and reduced glutathione (GSH) levels by activating NLRP3 inflammasome activation and cytokine release. The polypeptide is NADPH oxidase 4 (Nox4) (Mus musculus (Mouse)).